The sequence spans 807 residues: Potassium transporter 9 (807 aa).

Residues 1 to 59 (MAERVEASSVPEGENTIEEREVGAMWELEQKLDQPMDEEANKLNNMYREKGLSMLMLLR) are Cytoplasmic-facing. A helical membrane pass occupies residues 60–80 (LSFQSLGIVYGDLGTSPLYVF). The Extracellular portion of the chain corresponds to 81-96 (YNTFPDGIDDSEDVIG). Residues 97 to 117 (ALSLIIYSLLLIPLIKYVFIV) form a helical membrane-spanning segment. The Cytoplasmic portion of the chain corresponds to 118 to 185 (CKANDNGQGG…EGKEWRKRAL (68 aa)). Residues 186 to 206 (LVVVLLGTCMMIGDGILTPAI) form a helical membrane-spanning segment. Topologically, residues 207-225 (SVLSATGGIKVNNPKMSGD) are extracellular. A helical membrane pass occupies residues 226–246 (IVVLVAIVILIGLFSMQHYGT). Topologically, residues 247–248 (DK) are cytoplasmic. A helical transmembrane segment spans residues 249–269 (VGWLFAPIVLIWFLFIGATGM). Topologically, residues 270–299 (YNICKYDTSVLKAFSPTYIYLYFKRRGRDG) are extracellular. The chain crosses the membrane as a helical span at residues 300–320 (WISLGGILLSITGTEALYADI). The Cytoplasmic segment spans residues 321–322 (AY). A helical membrane pass occupies residues 323–343 (FPLLAIQLAFTFFVFPCLLLA). The Extracellular segment spans residues 344-369 (YCGQAAYLVIHKEHYQDAFYASIPDS). A helical transmembrane segment spans residues 370 to 390 (VYWPMFIVATGAAIVGSQATI). At 391-417 (SGTYSIVKQAVAHGCFPRVKIVHTSKK) the chain is on the cytoplasmic side. A helical membrane pass occupies residues 418-438 (FLGQIYCPDINWILMLGCIAV). The Extracellular portion of the chain corresponds to 439–454 (TASFKKQSQIGNAYGT). A helical transmembrane segment spans residues 455–475 (AVVLVMLVTTLLMVLIMLLVW). The Cytoplasmic segment spans residues 476 to 481 (HCHWIL). A helical membrane pass occupies residues 482–502 (VLIFTFLSFFVELSYFSAVIF). Topologically, residues 503 to 507 (KIDEG) are extracellular. Residues 508–528 (GWVPLIIAAISLLVMSVWHYA) traverse the membrane as a helical segment. Residues 529 to 807 (TVKKYEFEMH…LLNVGQVFYV (279 aa)) are Cytoplasmic-facing.

It belongs to the HAK/KUP transporter (TC 2.A.72.3) family.

It localises to the cell membrane. Functionally, putative potassium transporter. The chain is Potassium transporter 9 (POT9) from Arabidopsis thaliana (Mouse-ear cress).